A 159-amino-acid polypeptide reads, in one-letter code: Neuroglobin (159 aa).

A Globin domain is found at 3–151 (KLSEKDKELI…VVAAMSQGWA (149 aa)). Heme b is bound by residues H66 and H98.

Belongs to the globin family. Monomer. Homodimers and homotetramers. Mainly monomeric but also detected as part of homodimers and homotetramers.

Its subcellular location is the cytoplasm. It localises to the cytosol. The protein resides in the mitochondrion matrix. The catalysed reaction is Fe(III)-heme b-[protein] + nitric oxide + H2O = Fe(II)-heme b-[protein] + nitrite + 2 H(+). In terms of biological role, monomeric globin with a bis-histidyl six-coordinate heme-iron atom through which it can bind dioxygen, carbon monoxide and nitric oxide. Could help transport oxygen and increase its availability to the metabolically active neuronal tissues, though its low quantity in tissues as well as its high affinity for dioxygen, which may limit its oxygen-releasing ability, argue against it. The ferrous/deoxygenated form exhibits a nitrite reductase activity and it could produce nitric oxide which in turn inhibits cellular respiration in response to hypoxia. In its ferrous/deoxygenated state, it may also exhibit GDI (Guanine nucleotide Dissociation Inhibitor) activity toward heterotrimeric G-alpha proteins, thereby regulating signal transduction to facilitate neuroprotective responses in the wake of hypoxia and associated oxidative stress. The protein is Neuroglobin (ngb) of Dissostichus mawsoni (Antarctic cod).